Consider the following 362-residue polypeptide: Alpha-glucoside transport ATP-binding protein AglK (362 aa).

Residues 4–235 (LLLKDIRKSY…PANLFVARFI (232 aa)) form the ABC transporter domain. 36–43 (GPSGCGKS) serves as a coordination point for ATP.

This sequence belongs to the ABC transporter superfamily.

It is found in the cell inner membrane. Part of the binding-protein-dependent transport system for alpha-glucosides such as sucrose, maltose and trehalose. Probably responsible for energy coupling to the transport system. This is Alpha-glucoside transport ATP-binding protein AglK (aglK) from Rhizobium meliloti (strain 1021) (Ensifer meliloti).